Consider the following 181-residue polypeptide: Oligoribonuclease (181 aa).

Residues leucine 8–leucine 171 enclose the Exonuclease domain. Residue tyrosine 129 is part of the active site.

This sequence belongs to the oligoribonuclease family.

The protein localises to the cytoplasm. Functionally, 3'-to-5' exoribonuclease specific for small oligoribonucleotides. The chain is Oligoribonuclease from Aeromonas hydrophila subsp. hydrophila (strain ATCC 7966 / DSM 30187 / BCRC 13018 / CCUG 14551 / JCM 1027 / KCTC 2358 / NCIMB 9240 / NCTC 8049).